We begin with the raw amino-acid sequence, 551 residues long: Rqc2 homolog RqcH (551 aa).

Belongs to the NEMF family. In terms of assembly, associates with stalled 50S ribosomal subunits, binds to RqcP. Interacts with human fibronectin.

It is found in the secreted. The protein resides in the capsule. It localises to the cell surface. Its subcellular location is the cytoplasm. Its function is as follows. Key component of the ribosome quality control system (RQC), a ribosome-associated complex that mediates the extraction of incompletely synthesized nascent chains from stalled ribosomes and their subsequent degradation. RqcH recruits Ala-charged tRNA, and with RqcP directs the elongation of stalled nascent chains on 50S ribosomal subunits, leading to non-templated C-terminal alanine extensions (Ala tail). The Ala tail promotes nascent chain degradation. May add between 1 and at least 8 Ala residues. Binds to stalled 50S ribosomal subunits. Functionally, plays a significant role in virulence. Recombinant protein binds to immobilized human fibronectin; binding is saturable and competed by heparin. Purified protein inhibits binding of whole cells to fibronectin. This chain is Rqc2 homolog RqcH, found in Streptococcus pneumoniae serotype 2 (strain D39 / NCTC 7466).